Consider the following 284-residue polypeptide: Nucleoid occlusion protein (284 aa).

The H-T-H motif DNA-binding region spans 143–162; that stretch reads EALAQRVGKSQSAIANKMRL.

The protein belongs to the ParB family.

The protein resides in the cytoplasm. It is found in the nucleoid. Its function is as follows. Effects nucleoid occlusion by binding relatively nonspecifically to DNA and preventing the assembly of the division machinery in the vicinity of the nucleoid, especially under conditions that disturb the cell cycle. It helps to coordinate cell division and chromosome segregation by preventing the formation of the Z ring through the nucleoid, which would cause chromosome breakage. In Listeria monocytogenes serotype 4b (strain CLIP80459), this protein is Nucleoid occlusion protein.